The following is a 772-amino-acid chain: Heat shock protein 88 (772 aa).

Disordered stretches follow at residues 496–519 (TAAP…AEEK) and 729–772 (LGKP…DILD). Low complexity predominate over residues 497–513 (AAPAETPAETPANGEAA). Positions 735 to 772 (KPVEVPKEEPKDTPMESKDAPAEEPVATKDQKMDDILD) are enriched in basic and acidic residues.

The protein belongs to the heat shock protein 70 family.

Functionally, may function in protein folding and assembly, and disassembly of protein complexes. In Dictyostelium discoideum (Social amoeba), this protein is Heat shock protein 88 (hspH).